We begin with the raw amino-acid sequence, 79 residues long: Conotoxin 8 (79 aa).

The N-terminal stretch at 1–22 (MKLTCVLIITVLFLTASQLITA) is a signal peptide. Residues 23–47 (DYSRGQRQYRAVRLGDEMRNFKGAR) constitute a propeptide that is removed on maturation. Disulfide bonds link Cys-49–Cys-62, Cys-56–Cys-67, and Cys-61–Cys-77.

The protein belongs to the conotoxin O1 superfamily. Expressed by the venom duct.

Its subcellular location is the secreted. This chain is Conotoxin 8, found in Conus vexillum (Flag cone).